Here is a 217-residue protein sequence, read N- to C-terminus: Small ribosomal subunit protein uS3c (217 aa).

The KH type-2 domain occupies 47–118; the sequence is IQKHVKSVSN…NLRVTLTGVI (72 aa).

It belongs to the universal ribosomal protein uS3 family. In terms of assembly, part of the 30S ribosomal subunit.

The protein localises to the plastid. It is found in the chloroplast. The protein is Small ribosomal subunit protein uS3c (rps3) of Adiantum capillus-veneris (Maidenhair fern).